The chain runs to 205 residues: CASP-like protein 0U1 (205 aa).

Topologically, residues Met1 to Lys38 are cytoplasmic. Residues Phe39 to Ala57 form a helical membrane-spanning segment. The Extracellular segment spans residues Lys58–Gly89. A helical transmembrane segment spans residues Val90–Ile110. The Cytoplasmic segment spans residues Arg111–Ala124. The chain crosses the membrane as a helical span at residues Leu125–Val145. At Leu146–Ser159 the chain is on the extracellular side. The helical transmembrane segment at Leu160 to Ala180 threads the bilayer. Over Trp181 to Gly205 the chain is Cytoplasmic.

Belongs to the Casparian strip membrane proteins (CASP) family. As to quaternary structure, homodimer and heterodimers.

It is found in the cell membrane. In Ostreococcus lucimarinus (strain CCE9901), this protein is CASP-like protein 0U1.